Consider the following 184-residue polypeptide: Photosystem I assembly protein Ycf4 (184 aa).

2 helical membrane passes run 21-43 and 68-90; these read NFCWAAILLFGALGFFFVGISSY and FYGIAGLFLSFYLWCTIFWNVGS.

Belongs to the Ycf4 family.

The protein localises to the plastid. Its subcellular location is the chloroplast thylakoid membrane. In terms of biological role, seems to be required for the assembly of the photosystem I complex. This is Photosystem I assembly protein Ycf4 from Physcomitrium patens (Spreading-leaved earth moss).